Here is a 103-residue protein sequence, read N- to C-terminus: Large ribosomal subunit protein bL21 (103 aa).

The protein belongs to the bacterial ribosomal protein bL21 family. As to quaternary structure, part of the 50S ribosomal subunit. Contacts protein L20.

In terms of biological role, this protein binds to 23S rRNA in the presence of protein L20. The protein is Large ribosomal subunit protein bL21 of Salmonella schwarzengrund (strain CVM19633).